Consider the following 542-residue polypeptide: CTP synthase (542 aa).

Residues 1-265 form an amidoligase domain region; that stretch reads MARYVFITGG…DSEILSAFGI (265 aa). Position 13 (Ser13) interacts with CTP. Residue Ser13 coordinates UTP. Residue 14–19 participates in ATP binding; it reads SLGKGI. Tyr54 contacts L-glutamine. An ATP-binding site is contributed by Asp71. Mg(2+)-binding residues include Asp71 and Glu139. CTP contacts are provided by residues 146-148, 186-191, and Lys222; these read DIE and KTKPTQ. Residues 186–191 and Lys222 each bind UTP; that span reads KTKPTQ. The 251-residue stretch at 291-541 folds into the Glutamine amidotransferase type-1 domain; it reads TIAIVGKYTG…IAATVEQSRL (251 aa). Ala353 serves as a coordination point for L-glutamine. The active-site Nucleophile; for glutamine hydrolysis is the Cys380. L-glutamine contacts are provided by residues 381-384, Glu404, and Arg469; that span reads FGMQ. Catalysis depends on residues His514 and Glu516.

Belongs to the CTP synthase family. Homotetramer.

It carries out the reaction UTP + L-glutamine + ATP + H2O = CTP + L-glutamate + ADP + phosphate + 2 H(+). The enzyme catalyses L-glutamine + H2O = L-glutamate + NH4(+). It catalyses the reaction UTP + NH4(+) + ATP = CTP + ADP + phosphate + 2 H(+). It participates in pyrimidine metabolism; CTP biosynthesis via de novo pathway; CTP from UDP: step 2/2. With respect to regulation, allosterically activated by GTP, when glutamine is the substrate; GTP has no effect on the reaction when ammonia is the substrate. The allosteric effector GTP functions by stabilizing the protein conformation that binds the tetrahedral intermediate(s) formed during glutamine hydrolysis. Inhibited by the product CTP, via allosteric rather than competitive inhibition. In terms of biological role, catalyzes the ATP-dependent amination of UTP to CTP with either L-glutamine or ammonia as the source of nitrogen. Regulates intracellular CTP levels through interactions with the four ribonucleotide triphosphates. The protein is CTP synthase of Bartonella bacilliformis (strain ATCC 35685 / KC583 / Herrer 020/F12,63).